A 276-amino-acid chain; its full sequence is Rhomboid protease GlpG (276 aa).

6 helical membrane-spanning segments follow: residues 94–114 (GPVTWIVMLACVVVYIAMSLI), 142–162 (IFMHFSLMHILFNLLWWWYLG), 169–189 (LGSGKLIVITVISALLSGYVQ), 192–212 (FSGPWFGGLSGVVYALMGYVW), 229–249 (LIIFALLWIVAGWFDWFGMSM), and 250–270 (ANGAHIAGLIVGLAMAFVDTL). Serine 201 serves as the catalytic Nucleophile. The active site involves histidine 254.

The protein belongs to the peptidase S54 family.

It is found in the cell inner membrane. It catalyses the reaction Cleaves type-1 transmembrane domains using a catalytic dyad composed of serine and histidine that are contributed by different transmembrane domains.. In terms of biological role, rhomboid-type serine protease that catalyzes intramembrane proteolysis. This is Rhomboid protease GlpG from Salmonella typhi.